A 242-amino-acid polypeptide reads, in one-letter code: Enolase-phosphatase E1 (242 aa).

It belongs to the HAD-like hydrolase superfamily. MasA/MtnC family. In terms of assembly, monomer. The cofactor is Mg(2+).

It carries out the reaction 5-methylsulfanyl-2,3-dioxopentyl phosphate + H2O = 1,2-dihydroxy-5-(methylsulfanyl)pent-1-en-3-one + phosphate. Its pathway is amino-acid biosynthesis; L-methionine biosynthesis via salvage pathway; L-methionine from S-methyl-5-thio-alpha-D-ribose 1-phosphate: step 3/6. It functions in the pathway amino-acid biosynthesis; L-methionine biosynthesis via salvage pathway; L-methionine from S-methyl-5-thio-alpha-D-ribose 1-phosphate: step 4/6. Functionally, bifunctional enzyme that catalyzes the enolization of 2,3-diketo-5-methylthiopentyl-1-phosphate (DK-MTP-1-P) into the intermediate 2-hydroxy-3-keto-5-methylthiopentenyl-1-phosphate (HK-MTPenyl-1-P), which is then dephosphorylated to form the acireductone 1,2-dihydroxy-3-keto-5-methylthiopentene (DHK-MTPene). This is Enolase-phosphatase E1 from Synechococcus sp. (strain WH7803).